Consider the following 157-residue polypeptide: Lipoprotein signal peptidase (157 aa).

The next 4 helical transmembrane spans lie at 10–30, 38–58, 59–79, and 84–104; these read LVFM…KYAI, SLMV…LLSF, LEGG…IFLI, and LFKT…SNVL. Residues aspartate 114 and aspartate 131 contribute to the active site. A helical transmembrane segment spans residues 122-142; the sequence is FDFAIFNFADVMIDVGVGVLL.

The protein belongs to the peptidase A8 family.

It localises to the cell inner membrane. The enzyme catalyses Release of signal peptides from bacterial membrane prolipoproteins. Hydrolyzes -Xaa-Yaa-Zaa-|-(S,diacylglyceryl)Cys-, in which Xaa is hydrophobic (preferably Leu), and Yaa (Ala or Ser) and Zaa (Gly or Ala) have small, neutral side chains.. Its pathway is protein modification; lipoprotein biosynthesis (signal peptide cleavage). Its function is as follows. This protein specifically catalyzes the removal of signal peptides from prolipoproteins. The polypeptide is Lipoprotein signal peptidase (Helicobacter pylori (strain HPAG1)).